Here is a 90-residue protein sequence, read N- to C-terminus: Antitoxin epsilon 1 (90 aa).

The protein belongs to the epsilon antitoxin family. In the presence of the zeta toxin, forms an inactive PezA(2)PezT(2) heterotetramer.

Functionally, antitoxin component of a type II toxin-antitoxin (TA) system. Neutralizes the toxic effect of zeta toxin. Part of a postsegregational killing (PSK) system involved in the killing of plasmid-free cells. Continuous synthesis of the epsilon antitoxin is required to counteract the zeta toxin. The sequence is that of Antitoxin epsilon 1 from Enterococcus faecalis (Streptococcus faecalis).